Reading from the N-terminus, the 295-residue chain is Ribosomal protein L11 methyltransferase (295 aa).

S-adenosyl-L-methionine contacts are provided by Thr138, Gly161, Asp183, and Asn230.

This sequence belongs to the methyltransferase superfamily. PrmA family.

It localises to the cytoplasm. The enzyme catalyses L-lysyl-[protein] + 3 S-adenosyl-L-methionine = N(6),N(6),N(6)-trimethyl-L-lysyl-[protein] + 3 S-adenosyl-L-homocysteine + 3 H(+). Methylates ribosomal protein L11. The polypeptide is Ribosomal protein L11 methyltransferase (Rhodopseudomonas palustris (strain BisB5)).